A 558-amino-acid chain; its full sequence is SPATS2-like protein (558 aa).

Residue Ala2 is modified to N-acetylalanine. Over residues 63–79 the composition is skewed to basic residues; the sequence is GKKKNNKRKRSKSKQHQ. Residues 63–204 are disordered; sequence GKKKNNKRKR…SPVKSNAPAA (142 aa). 2 stretches are compositionally biased toward basic and acidic residues: residues 80-92 and 110-142; these read GNKDAKDKVERPE and GCEKDSSSPDSTREKLALTPREKKISILEEPPR. Ser120 is subject to Phosphoserine. The stretch at 279 to 344 forms a coiled coil; the sequence is KEEAMDILTA…ARFSCDIEQL (66 aa). Disordered regions lie at residues 385–406 and 421–514; these read GNFARKSSGHNKPSEGKAANPK and TMPT…RQHA. Residues 421–433 show a composition bias toward polar residues; the sequence is TMPTNKQQNGPSS. Over residues 469 to 485 the composition is skewed to basic residues; that stretch reads HEHRRQPHNGFRPKNKG.

The protein belongs to the SPATS2 family.

The protein localises to the cytoplasm. The protein resides in the nucleus. It is found in the nucleolus. In Mus musculus (Mouse), this protein is SPATS2-like protein (Spats2l).